The chain runs to 194 residues: tRNA (guanosine(18)-2'-O)-methyltransferase (194 aa).

Residues T99, 122-126 (GAEKW), I142, and L151 each bind S-adenosyl-L-methionine.

Belongs to the class IV-like SAM-binding methyltransferase superfamily. RNA methyltransferase TrmH family. As to quaternary structure, monomer.

It carries out the reaction guanosine(18) in tRNA + S-adenosyl-L-methionine = 2'-O-methylguanosine(18) in tRNA + S-adenosyl-L-homocysteine + H(+). With respect to regulation, stimulated by magnesium ions and spermine. Inhibited by S-adenosyl-homocysteine. Its function is as follows. Catalyzes the 2'-O methylation of guanosine at position 18 in tRNA. This Thermus thermophilus (strain ATCC BAA-163 / DSM 7039 / HB27) protein is tRNA (guanosine(18)-2'-O)-methyltransferase.